Reading from the N-terminus, the 131-residue chain is Transcription antitermination protein NusB (131 aa).

It belongs to the NusB family.

In terms of biological role, involved in transcription antitermination. Required for transcription of ribosomal RNA (rRNA) genes. Binds specifically to the boxA antiterminator sequence of the ribosomal RNA (rrn) operons. This Campylobacter fetus subsp. fetus (strain 82-40) protein is Transcription antitermination protein NusB.